The following is a 947-amino-acid chain: Vacuolar membrane protease (947 aa).

Over 1–15 the chain is Cytoplasmic; it reads MRFKALLRAIFRFRK. A helical membrane pass occupies residues 16–36; that stretch reads TNFSILLIITYAIIIALLVFD. The Vacuolar segment spans residues 37 to 358; that stretch reads RSRYKLDLPN…GLFFVVVDTK (322 aa). Asparagine 46, asparagine 92, asparagine 108, and asparagine 121 each carry an N-linked (GlcNAc...) asparagine glycan. Residues histidine 156 and aspartate 168 each contribute to the Zn(2+) site. Glutamate 200 serves as the catalytic Proton acceptor. Zn(2+) is bound by residues glutamate 201, glutamate 226, and histidine 300. A glycan (N-linked (GlcNAc...) asparagine) is linked at asparagine 319. A helical membrane pass occupies residues 359–379; it reads HLFYADIFMLIVGPILLMMKA. Over 380-391 the chain is Cytoplasmic; that stretch reads HLDKRRRLERSR. A helical transmembrane segment spans residues 392-412; that stretch reads LVQLRLLLSLGLSVVFLLLLT. The Vacuolar portion of the chain corresponds to 413–428; it reads KSLNSFNPFVYSADYR. A helical membrane pass occupies residues 429-449; that stretch reads TPLTGLFLLFVTVNYLIVTLA. Over 450–458 the chain is Cytoplasmic; it reads ERLNPTESY. A helical transmembrane segment spans residues 459–479; the sequence is KTVAINQIFIIAWLMQLYITL. At 480–489 the chain is on the vacuolar side; the sequence is RMAKSDFTLT. The helical transmembrane segment at 490–510 threads the bilayer; sequence GTYPLSIFSGCLIVALSLGLF. Residues 511-601 lie on the Cytoplasmic side of the membrane; sequence GTKNKAVNDA…DKNSDFSKHY (91 aa). 2 stretches are compositionally biased toward polar residues: residues 522 to 531 and 546 to 567; these read NSSVRYASSQ and NINQVRDTGNQEVTSNTNTDLH. Residues 522–573 are disordered; sequence NSSVRYASSQNDEDNPLPSQDRGENINQVRDTGNQEVTSNTNTDLHSNAEEV. A helical membrane pass occupies residues 602 to 622; sequence NWIVQFLCIVPISSFIFLFSL. The Vacuolar segment spans residues 623 to 641; that stretch reads DYTLDAIHKMVQETTDDVQ. The helical transmembrane segment at 642-662 threads the bilayer; sequence LICIIITIGVILLALPILPFI. Topologically, residues 663 to 669 are cytoplasmic; the sequence is SKLNYQS. Residues 670–690 form a helical membrane-spanning segment; it reads SVIIAIIGVLLFGKSLVMQPF. Residues 691–947 are Vacuolar-facing; the sequence is SEIAPLKVRF…LVVIKDKIQL (257 aa). Residues asparagine 742, asparagine 784, asparagine 801, and asparagine 833 are each glycosylated (N-linked (GlcNAc...) asparagine).

This sequence belongs to the peptidase M28 family. Zn(2+) serves as cofactor.

The protein localises to the vacuole membrane. May be involved in vacuolar sorting and osmoregulation. The chain is Vacuolar membrane protease from Candida glabrata (strain ATCC 2001 / BCRC 20586 / JCM 3761 / NBRC 0622 / NRRL Y-65 / CBS 138) (Yeast).